Here is a 72-residue protein sequence, read N- to C-terminus: Translation initiation factor IF-1 (72 aa).

One can recognise an S1-like domain in the interval 1–72 (MAKEDNIEMQ…SKGRIVFRAR (72 aa)).

The protein belongs to the IF-1 family. As to quaternary structure, component of the 30S ribosomal translation pre-initiation complex which assembles on the 30S ribosome in the order IF-2 and IF-3, IF-1 and N-formylmethionyl-tRNA(fMet); mRNA recruitment can occur at any time during PIC assembly.

The protein localises to the cytoplasm. In terms of biological role, one of the essential components for the initiation of protein synthesis. Stabilizes the binding of IF-2 and IF-3 on the 30S subunit to which N-formylmethionyl-tRNA(fMet) subsequently binds. Helps modulate mRNA selection, yielding the 30S pre-initiation complex (PIC). Upon addition of the 50S ribosomal subunit IF-1, IF-2 and IF-3 are released leaving the mature 70S translation initiation complex. The sequence is that of Translation initiation factor IF-1 from Shewanella frigidimarina (strain NCIMB 400).